We begin with the raw amino-acid sequence, 295 residues long: 4-diphosphocytidyl-2-C-methyl-D-erythritol kinase (295 aa).

Residue K22 is part of the active site. Residue 106–116 (PAGGGFGGGSS) coordinates ATP. The active site involves D148.

The protein belongs to the GHMP kinase family. IspE subfamily.

It catalyses the reaction 4-CDP-2-C-methyl-D-erythritol + ATP = 4-CDP-2-C-methyl-D-erythritol 2-phosphate + ADP + H(+). It functions in the pathway isoprenoid biosynthesis; isopentenyl diphosphate biosynthesis via DXP pathway; isopentenyl diphosphate from 1-deoxy-D-xylulose 5-phosphate: step 3/6. Functionally, catalyzes the phosphorylation of the position 2 hydroxy group of 4-diphosphocytidyl-2C-methyl-D-erythritol. In Xanthomonas oryzae pv. oryzae (strain MAFF 311018), this protein is 4-diphosphocytidyl-2-C-methyl-D-erythritol kinase.